A 206-amino-acid chain; its full sequence is Ras-related protein Rab-14 (206 aa).

15–22 (GDMGVGKS) contacts GTP. Positions 37-45 (SPHTIGVEF) match the Effector region motif. GTP contacts are provided by residues 63 to 67 (DTAGQ) and 121 to 124 (NKKD). The interval 182 to 206 (PDGGITKNPPQTITDKPQDASKCSC) is disordered. The segment covering 189–206 (NPPQTITDKPQDASKCSC) has biased composition (polar residues). Residues cysteine 204 and cysteine 206 are each lipidated (S-geranylgeranyl cysteine). Cysteine 206 carries the post-translational modification Cysteine methyl ester.

This sequence belongs to the small GTPase superfamily. Rab family.

It is found in the endosome. Its subcellular location is the contractile vacuole. The protein localises to the membrane. The catalysed reaction is GTP + H2O = GDP + phosphate + H(+). Its activity is regulated as follows. Rab activation is generally mediated by a guanine exchange factor (GEF), while inactivation through hydrolysis of bound GTP is catalyzed by a GTPase activating protein (GAP). That Rab is activated by the DENND6A and DENND6B guanine exchange factors (GEF). In terms of biological role, the small GTPases Rab are key regulators of intracellular membrane trafficking, from the formation of transport vesicles to their fusion with membranes. Rabs cycle between an inactive GDP-bound form and an active GTP-bound form that is able to recruit to membranes different set of downstream effectors directly responsible for vesicle formation, movement, tethering and fusion. Regulates the fusion of phagosomes and lysosomes. The chain is Ras-related protein Rab-14 (rab14) from Dictyostelium discoideum (Social amoeba).